Consider the following 857-residue polypeptide: MAIQLRSLFPLALPGMLALLGWWWFFSRKKDRLSSSDKQVETLKVGPAIKDRRLSEEACPGVLSVAPTVTQPPGREEQRCVDKPSTEPLALPRTRQVRRRSESSGNLPSVADTRSQPGPCRDEIAKVELSLMGDKAKSIPLGCPLLPKDASFPYEAVERCKQESALGKTPGRGWPSPYAASGEKARETGGTEGTGDAVLGENVSEEGLLSQECVSEVEKSEFPILAPGGGEGEEVSHGPPQVAELLKKEEYIVGKLPSSFVEPVHSEPVKDEDALEPQVKGSSNTSDRDLAGELDKDETVPENDQIKQAAFQLISQVILEATEEFRATTVGKTVAQVHPTSATQPKGKEESCVPASQETSLGQDTSDPASTRTGATASPSAEALPPKTYVSCLSSPLSGPTKDQKPKNSAHHISLAPCPPPVTPQRQSLEGASNPRGDDNFVACMANNSQSVLSVSSLGQCSDPVSTSGLEDSCTETISSSGDKAMTPPLPVSTQPFSNGVLKEELSDLGTEDGWTMDTEADHSGGSDGNSMDSVDSCCGLTKPDSPQSVQAGSNPKKVDLIIWEIEVPKHLVGRLIGKQGRYVSFLKQTSGAKIYISTLPYTQNIQICHIEGSQHHVDKALNLIGKKFKELNLTNIYAPPLPSLALPSLPMTSWLMLPDGITVEVIVVNQVNAGHLFVQQHTHPTFHALRSLDQQMYLCYSQPGIPTLPTPVEITVICAAPGADGAWWRAQVVASYEETNEVEIRYVDYGGYKRVKVDVLRQIRSDFVTLPFQGAEVLLDSVVPLSDDDHFSPEADAAMSEMTGNTALLAQVTSYSATGLPLIQLWSVVGDEVVLINRSLVERGLAQWVDSYYASL.

Residues 1-29 (MAIQLRSLFPLALPGMLALLGWWWFFSRK) constitute a mitochondrion transit peptide. Phosphoserine is present on Ser55. The interval 65-121 (VAPTVTQPPGREEQRCVDKPSTEPLALPRTRQVRRRSESSGNLPSVADTRSQPGPCR) is disordered. Basic and acidic residues predominate over residues 74-85 (GREEQRCVDKPS). Phosphoserine occurs at positions 101, 103, and 164. The span at 103 to 116 (SSGNLPSVADTRSQ) shows a compositional bias: polar residues. Disordered regions lie at residues 165 to 198 (ALGK…GDAV) and 260 to 303 (FVEP…VPEN). Over residues 286–299 (SDRDLAGELDKDET) the composition is skewed to basic and acidic residues. Residues 306–319 (IKQAAFQLISQVIL) form a PKA-RII subunit binding domain region. 3 disordered regions span residues 336–437 (QVHP…NPRG), 466–497 (STSG…TQPF), and 512–554 (EDGW…QAGS). The segment covering 354–379 (PASQETSLGQDTSDPASTRTGATASP) has biased composition (polar residues). Thr401 carries the post-translational modification Phosphothreonine. The segment covering 466 to 482 (STSGLEDSCTETISSSG) has biased composition (polar residues). A Phosphothreonine modification is found at Thr487. 2 positions are modified to phosphoserine: Ser527 and Ser546. A compositionally biased stretch (polar residues) spans 545 to 554 (DSPQSVQAGS). One can recognise a KH domain in the interval 561-625 (LIIWEIEVPK…HHVDKALNLI (65 aa)). Residues 712–771 (PVEITVICAAPGADGAWWRAQVVASYEETNEVEIRYVDYGGYKRVKVDVLRQIRSDFVTL) enclose the Tudor domain.

In terms of assembly, interacts with SLC8A3. Interacts with CFAP91. Interacts with CLPB. Interacts with NDUFS1. As to expression, highest expression in testis, heart, liver, skeletal muscle, intestine and kidney, followed by brain and lung. No expression in spleen. Isoform 1/D-AKAP1A is expressed predominantly in testis whereas isoform 4/D-AKAP1D is expressed primarily in liver. Expression is decreased in hearts of diabetic mice (at protein level).

It localises to the mitochondrion outer membrane. The protein localises to the mitochondrion. The protein resides in the endoplasmic reticulum. Its function is as follows. Differentially targeted protein that binds to type I and II regulatory subunits of protein kinase A. Anchors them to the cytoplasmic face of the mitochondrial outer membrane or allows them to reside in the endoplasmic reticulum. Involved in mitochondrial-mediated antiviral innate immunity. Promotes translocation of NDUFS1 into mitochondria to regulate mitochondrial membrane respiratory chain NADH dehydrogenase (Complex I) activity. Under diabetic conditions, myocardial AKAP1 expression decreases which blocks the translocation of NDUFS1 from the cytosol to mitochondria. Reduction of NDUFS1 in mitochondria decreases ATP production and increases mitochondrial ROS level, which causes mitochondrial dysfunction and cell apoptosis, respectively, thereby leading to cardiac dysfunction. The chain is A-kinase anchor protein 1, mitochondrial from Mus musculus (Mouse).